The sequence spans 720 residues: DNA helicase II (720 aa).

The region spanning 8 to 286 (DSLNDKQREA…IRLEQNYRST (279 aa)) is the UvrD-like helicase ATP-binding domain. ATP contacts are provided by residues 32-37 (GSGKTR) and R284. The 278-residue stretch at 287–564 (SNILSAANAL…QLMTLHSAKG (278 aa)) folds into the UvrD-like helicase C-terminal domain.

It belongs to the helicase family. UvrD subfamily.

The catalysed reaction is Couples ATP hydrolysis with the unwinding of duplex DNA by translocating in the 3'-5' direction.. The enzyme catalyses ATP + H2O = ADP + phosphate + H(+). Functionally, a helicase with DNA-dependent ATPase activity. Unwinds DNA duplexes with 3'-5' polarity. Translocates on single-stranded DNA with 3'-5' polarity. Initiates unwinding more efficiently from a nicked substrate than double-stranded DNA. Involved in the post-incision events of nucleotide excision repair and methyl-directed mismatch repair, and probably also in repair of alkylated DNA. In Escherichia coli (strain K12), this protein is DNA helicase II.